Consider the following 137-residue polypeptide: MKIALIAHDKKKQDMVQFTTAYRDILKNHDLYATGTTGLKIHEATGLQIERFQSGPLGGDQQIGALIAANALDLVIFLRDPLTAQPHEPDVSALIRLCDVYSIPLATNMGTAEILVRTLDEGVFEFRDLLRGEEPNV.

The region spanning 1-137 is the MGS-like domain; that stretch reads MKIALIAHDK…DLLRGEEPNV (137 aa). Substrate contacts are provided by residues H8, K12, 34 to 37, and 54 to 55; these read TGTT and SG. D60 acts as the Proton donor/acceptor in catalysis. H87 provides a ligand contact to substrate.

It belongs to the methylglyoxal synthase family.

The enzyme catalyses dihydroxyacetone phosphate = methylglyoxal + phosphate. Functionally, catalyzes the formation of methylglyoxal from dihydroxyacetone phosphate. In Bacillus subtilis (strain 168), this protein is Methylglyoxal synthase.